A 328-amino-acid chain; its full sequence is Aspartate carbamoyltransferase catalytic subunit (328 aa).

2 residues coordinate carbamoyl phosphate: Arg-64 and Thr-65. Lys-92 is an L-aspartate binding site. Carbamoyl phosphate-binding residues include Arg-114, His-144, and Gln-147. Residues Arg-177 and Arg-232 each contribute to the L-aspartate site. Carbamoyl phosphate is bound by residues Gly-273 and Pro-274.

This sequence belongs to the aspartate/ornithine carbamoyltransferase superfamily. ATCase family. As to quaternary structure, heterododecamer (2C3:3R2) of six catalytic PyrB chains organized as two trimers (C3), and six regulatory PyrI chains organized as three dimers (R2).

The catalysed reaction is carbamoyl phosphate + L-aspartate = N-carbamoyl-L-aspartate + phosphate + H(+). The protein operates within pyrimidine metabolism; UMP biosynthesis via de novo pathway; (S)-dihydroorotate from bicarbonate: step 2/3. Catalyzes the condensation of carbamoyl phosphate and aspartate to form carbamoyl aspartate and inorganic phosphate, the committed step in the de novo pyrimidine nucleotide biosynthesis pathway. This Halorhodospira halophila (strain DSM 244 / SL1) (Ectothiorhodospira halophila (strain DSM 244 / SL1)) protein is Aspartate carbamoyltransferase catalytic subunit.